A 410-amino-acid polypeptide reads, in one-letter code: MKIKFEIKYKDAAGKVGKIKLNGKTIETPYLFPVINPFKQELPIKEIKKMGFNAIITNAYILFKRKEEVMEKGIHNFLGFDGIIETDSGAYQLLQYGDIDIENEDIIYFQNEIGVDIGNILDIPSYGKTYEEAKKDLEITLERLKQAIEMANFAINGPIQGDKYLDLRYKALEEVSKLDIDIYAIGGIVPYMNQYKIESLAKIIGPLLLDIPRDRPVHLFGLGHPLIMPLFVALGADLFDSASYSLFAKEERILTPFRTFRLEDLTDSYILDYKASELKGMENKTYIIAKHNLLVLRNEINFIRDLIRQNRLWDYVIIKAHAHPSIYFATKYVLENLYEKLKEHEPITKRVGILYQGELTELRSDLRYAIEQLKKLDKSQINDILDYAWPFGQFEIGEKDKKLFFQRFLK.

The active-site Nucleophile is Asp-87. Substrate-binding residues include Asp-122 and Gly-187.

Belongs to the archaeosine tRNA-ribosyltransferase family. Zn(2+) is required as a cofactor.

The catalysed reaction is guanosine(15) in tRNA + 7-cyano-7-deazaguanine = 7-cyano-7-carbaguanosine(15) in tRNA + guanine. It participates in tRNA modification; archaeosine-tRNA biosynthesis. Its function is as follows. Exchanges the guanine residue with 7-cyano-7-deazaguanine (preQ0) at position 15 in the dihydrouridine loop (D-loop) of archaeal tRNAs. This chain is tRNA-guanine(15) transglycosylase, found in Nanoarchaeum equitans (strain Kin4-M).